The primary structure comprises 1165 residues: Activity-dependent neuroprotector homeobox protein 2 (1165 aa).

A C2H2-type 1 zinc finger spans residues 73–96 (YCCSLCRYSTKVLTSLKNHLHRYH). The segment at 106 to 128 (IPCPNCPFSSQPRVVGKHFRMFH) adopts a C2H2-type 2; degenerate zinc-finger fold. Residue Lys146 forms a Glycyl lysine isopeptide (Lys-Gly) (interchain with G-Cter in SUMO2) linkage. The C2H2-type 3; degenerate zinc-finger motif lies at 155–178 (FTCLKCNFSNTLYYSMKKHVLVAH). Residues 215–240 (YYCKKCSAIASSQDALMYHILTSDAH) form a C2H2-type 4 zinc finger. Residues 303-318 (SGTVQSVTVTPGTSGS) are compositionally biased toward low complexity. The segment at 303 to 327 (SGTVQSVTVTPGTSGSLTHSPPTTA) is disordered. The C2H2-type 5; degenerate zinc finger occupies 696–718 (KTCPVCNELFPSNVYQVHMEVAH). The segment at 724-746 (QLCQVCNELFPANVYQVHMEVAH) adopts a C2H2-type 6; degenerate zinc-finger fold. The C2H2-type 7; degenerate zinc-finger motif lies at 777 to 798 (VRCLSCKCLVSQEELMHHLLMH). 2 C2H2-type zinc fingers span residues 800–823 (LGCL…RTKH) and 905–935 (LTCP…PTVH). The segment at 1005 to 1068 (PVKRKLPEGH…SGPSEDSLQA (64 aa)) is disordered. Residues Lys1009 and Lys1048 each participate in a glycyl lysine isopeptide (Lys-Gly) (interchain with G-Cter in SUMO2) cross-link. Positions 1009–1024 (KLPEGHLGPEDQRDGE) are enriched in basic and acidic residues. The segment at residues 1090 to 1132 (DYFHRRPYPSRKEVELLSSLLWVWKIDVASFFGKRRYICMKAI) is a DNA-binding region (homeobox).

This sequence belongs to the krueppel C2H2-type zinc-finger protein family. May interact with SMARCA4/BRG1. In terms of tissue distribution, expressed widely, with the highest level in the brain.

Its subcellular location is the nucleus. May be involved in transcriptional regulation. May play a role in neuronal function; perhaps involved in protection of brain tissues from oxidative stress. May be involved in erythroid differentiation. The polypeptide is Activity-dependent neuroprotector homeobox protein 2 (Adnp2) (Mus musculus (Mouse)).